The primary structure comprises 94 residues: Co-chaperonin GroES (94 aa).

Belongs to the GroES chaperonin family. In terms of assembly, heptamer of 7 subunits arranged in a ring. Interacts with the chaperonin GroEL.

The protein resides in the cytoplasm. Its function is as follows. Together with the chaperonin GroEL, plays an essential role in assisting protein folding. The GroEL-GroES system forms a nano-cage that allows encapsulation of the non-native substrate proteins and provides a physical environment optimized to promote and accelerate protein folding. GroES binds to the apical surface of the GroEL ring, thereby capping the opening of the GroEL channel. In Streptococcus pneumoniae (strain CGSP14), this protein is Co-chaperonin GroES.